The sequence spans 473 residues: 3-isopropylmalate dehydratase large subunit (473 aa).

The [4Fe-4S] cluster site is built by Cys-355, Cys-415, and Cys-418. The interval 423 to 452 (PDQLAPGERSASTSNRNFEGRQGKGGRTHL) is disordered.

Belongs to the aconitase/IPM isomerase family. LeuC type 1 subfamily. In terms of assembly, heterodimer of LeuC and LeuD. The cofactor is [4Fe-4S] cluster.

It carries out the reaction (2R,3S)-3-isopropylmalate = (2S)-2-isopropylmalate. It participates in amino-acid biosynthesis; L-leucine biosynthesis; L-leucine from 3-methyl-2-oxobutanoate: step 2/4. Its function is as follows. Catalyzes the isomerization between 2-isopropylmalate and 3-isopropylmalate, via the formation of 2-isopropylmaleate. In Corynebacterium jeikeium (strain K411), this protein is 3-isopropylmalate dehydratase large subunit.